Here is an 837-residue protein sequence, read N- to C-terminus: Protein translocase subunit SecA 1 (837 aa).

ATP-binding positions include Q85, 103–107 (GEGKT), and D492. Residues 787–806 (QEVAKGEAVHPKEDGEEPKR) show a composition bias toward basic and acidic residues. The disordered stretch occupies residues 787–811 (QEVAKGEAVHPKEDGEEPKRKPVRK). Zn(2+)-binding residues include C821, C823, C832, and C833.

This sequence belongs to the SecA family. As to quaternary structure, monomer and homodimer. Part of the essential Sec protein translocation apparatus which comprises SecA, SecYEG and auxiliary proteins SecDF. Other proteins may also be involved. Zn(2+) is required as a cofactor.

The protein resides in the cell membrane. It is found in the cytoplasm. It carries out the reaction ATP + H2O + cellular proteinSide 1 = ADP + phosphate + cellular proteinSide 2.. Functionally, part of the Sec protein translocase complex. Interacts with the SecYEG preprotein conducting channel. Has a central role in coupling the hydrolysis of ATP to the transfer of proteins into and across the cell membrane, serving as an ATP-driven molecular motor driving the stepwise translocation of polypeptide chains across the membrane. The chain is Protein translocase subunit SecA 1 from Geobacillus kaustophilus (strain HTA426).